The following is a 461-amino-acid chain: Arginine biosynthesis bifunctional protein ArgJ, chloroplastic (461 aa).

Substrate-binding residues include Thr-202, Lys-228, Thr-239, Glu-326, Asn-456, and Thr-461. Thr-239 (nucleophile) is an active-site residue.

This sequence belongs to the ArgJ family. As to quaternary structure, heterodimer of an alpha and a beta chain.

The protein resides in the plastid. The protein localises to the chloroplast. It carries out the reaction N(2)-acetyl-L-ornithine + L-glutamate = N-acetyl-L-glutamate + L-ornithine. The catalysed reaction is L-glutamate + acetyl-CoA = N-acetyl-L-glutamate + CoA + H(+). It functions in the pathway amino-acid biosynthesis; L-arginine biosynthesis; L-ornithine and N-acetyl-L-glutamate from L-glutamate and N(2)-acetyl-L-ornithine (cyclic): step 1/1. Its pathway is amino-acid biosynthesis; L-arginine biosynthesis; N(2)-acetyl-L-ornithine from L-glutamate: step 1/4. In terms of biological role, catalyzes two activities which are involved in the cyclic version of arginine biosynthesis: the synthesis of acetylglutamate from glutamate and acetyl-CoA, and of ornithine by transacetylation between acetylornithine and glutamate. This chain is Arginine biosynthesis bifunctional protein ArgJ, chloroplastic, found in Ostreococcus lucimarinus (strain CCE9901).